Reading from the N-terminus, the 684-residue chain is MPSCDDTASSDTDCQSQVSSTAHLHSYRSNGLVEPPSKRRLTTTNETSLSSAGATTFQIESPGSISAITTNNSTTSAGDSNNSNSFSDQHSRHPRTPNAMNSPTHTPISDIEEDPIQQLPLPSPSASPIQSDTENEHVTTPDSLQGKANLDSIENVMSNEPTTQSELVDLVTKLSGFLSEANQNHLVFKLLQKTTRPTLSTFNNLINNSLKRDILSNVPFEVTMKILSYLDYKTLLSVAQVCKKWFDIINNPDTWIKLLKRDKLITDDAVIKYELQYPDQLLREWSTLPEINSAQVLYKKRKIIVNRWMDPKFKPHRISVSGHGNKVVTCLQHDDEKVVTGVDDKCISIYSTQTGQLMKVLEGHEGGVWALKYTGNTLVTGSTDRTVRVWNMKTGQCTHIFRGHTSTIRCLDIIHPAVIGKNQDGEDIVFPEYPLLITGSRDHNIHVWKLPVVDDSQDYIETFEGEFDNPYLIAVLSGHTQSVRSISGYGNIIISGSYDSTVRVWDLLDDGHCTHVLQGHLDRVYSTAIDFHSKTCFSGSMDSNINVWNFETGELKKVLVGHASLVGLLDLVDDVLVSAAADATLRIWDAKTGELRSKLKGHGAAITCFEHDGLRVVSGSEKMLKLWNVEKGTFARDLLSDVTGGIWQVRFDYKRCVAAVQRIINEDEGETFIEILDFSQPLLQ.

The span at Met1 to Gln17 shows a compositional bias: low complexity. Residues Met1–Gly146 are disordered. Composition is skewed to polar residues over residues Val18 to Ser29 and Thr42 to Gly63. Residues Ser64 to Ala77 are compositionally biased toward low complexity. 2 stretches are compositionally biased toward polar residues: residues Gly78–Asp88 and Asn98–Pro107. Over residues Ile116 to Ser131 the composition is skewed to low complexity. The region spanning Arg212 to Leu258 is the F-box domain. WD repeat units lie at residues Gly322–Ser351, Gly363–Asn391, Gly403–Pro431, Asp442–Asp468, Gly478–Asp506, Gly519–Asn549, and Gly561–Asp589.

Functionally, this protein is essential for initiation of DNA replication and separation of the spindle pole bodies to form the poles of the mitotic spindle. It also plays a role in bud development, fusion of zygotic nuclei after conjugation and various aspects of sporulation. Required for HTA1-HTB1 locus transcription activation. This is Cell division control protein 4 (CDC4) from Candida albicans (Yeast).